An 83-amino-acid chain; its full sequence is MENDAGESVDLYCPRKCSASNRIIHAKDHASVQLNIVDVDPETGRMTVGSKTYAICGEIRRMGESDDCIVRLAKKDGLITKAF.

Belongs to the eukaryotic ribosomal protein eS21 family. As to quaternary structure, component of the 40S small ribosomal subunit. Interacts with sta.

It is found in the cytoplasm. It localises to the cytosol. The protein resides in the rough endoplasmic reticulum. The polypeptide is Small ribosomal subunit protein eS21 (RpS21) (Ceratitis capitata (Mediterranean fruit fly)).